The primary structure comprises 84 residues: uncharacterized protein (84 aa).

The LITAF domain occupies 1 to 83; it reads MDDKFTTLPC…CKQAVFVYKI (83 aa). Cys-21 and Cys-24 together coordinate Zn(2+). Residues 39 to 61 are membrane-binding amphipathic helix; that stretch reads MSWVVCTAITLACLPCCCIPFLC. Positions 71 and 74 each coordinate Zn(2+).

It localises to the host membrane. This is an uncharacterized protein from Dryophytes versicolor (chameleon treefrog).